Reading from the N-terminus, the 977-residue chain is Synaptopodin 2-like protein (977 aa).

Positions 6–88 (EVLVTLSGGA…QLVLTVQRLA (83 aa)) constitute a PDZ domain. 3 disordered regions span residues 91–226 (GPVQ…GPLR), 317–352 (AGTG…QSDW), and 364–677 (AGSR…EDAL). Residues S108 and S111 each carry the phosphoserine modification. Residues 109–123 (PLSPEPPGAPVPQPL) are compositionally biased toward pro residues. T141 bears the Phosphothreonine mark. S143, S178, and S180 each carry phosphoserine. Residues 183–192 (EPAPTIPGPP) show a composition bias toward pro residues. The segment covering 194–203 (QGDSRVSSPS) has biased composition (polar residues). A compositionally biased stretch (low complexity) spans 216–226 (EALLLPHGPLR). Phosphoserine is present on residues S345, S350, S374, S381, and S384. Omega-N-methylarginine is present on R386. Residues 436–450 (PPSPLPAPVASPRPF) are compositionally biased toward pro residues. Residues R466, R469, and R479 each carry the omega-N-methylarginine modification. A compositionally biased stretch (polar residues) spans 510 to 525 (LSSQGPTPLPSFTSGV). Composition is skewed to low complexity over residues 530–545 (PVSG…GPVT) and 572–595 (SAAA…ARPE). Positions 596–607 (APAPGPGAPEPP) are enriched in pro residues. A phosphoserine mark is found at S670 and S678. Residues 697–802 (TLPHVTPKTP…PSLPPSWKYS (106 aa)) form a disordered region. Positions 704 to 730 (KTPPPMAPKTPPPMTPKTPPPVAPKPP) are enriched in pro residues. A phosphothreonine mark is found at T705 and T713. Position 757 is an omega-N-methylarginine (R757). Over residues 781-796 (GLGPRPRSPSPTPSLP) the composition is skewed to pro residues. Phosphoserine occurs at positions 788 and 790. T792 is subject to Phosphothreonine. Omega-N-methylarginine occurs at positions 806, 826, and 889. Residue S891 is modified to Phosphoserine. Phosphothreonine is present on residues T892 and T898. Position 910 is an omega-N-methylarginine (R910). Asymmetric dimethylarginine; alternate is present on R921. R921 carries the omega-N-methylarginine; alternate modification. Residues 922 to 950 (TELASAPVPSPAPPPEAPRGLGASPSSCG) form a disordered region. The span at 929 to 938 (VPSPAPPPEA) shows a compositional bias: pro residues. Residues R955 and R957 each carry the omega-N-methylarginine modification.

This sequence belongs to the synaptopodin family.

The protein resides in the cytoplasm. Its subcellular location is the cytoskeleton. Functionally, actin-associated protein that may play a role in modulating actin-based shape. The sequence is that of Synaptopodin 2-like protein (SYNPO2L) from Homo sapiens (Human).